The following is a 189-amino-acid chain: Adenylate kinase (189 aa).

An ATP-binding site is contributed by 12-17; it reads GSGKTT. Positions 33 to 62 are NMP; sequence STGDLLRAEVASGSELGKLIDGFISKGNLV. Residues threonine 34, arginine 39, 60-62, 87-90, and glutamine 94 each bind AMP; these read NLV and GYPR. An LID region spans residues 129-135; it reads GRARGAD. Arginine 130 is a binding site for ATP. 2 residues coordinate AMP: arginine 132 and arginine 144. An ATP-binding site is contributed by arginine 172.

Belongs to the adenylate kinase family. In terms of assembly, monomer.

It localises to the cytoplasm. It catalyses the reaction AMP + ATP = 2 ADP. It functions in the pathway purine metabolism; AMP biosynthesis via salvage pathway; AMP from ADP: step 1/1. Functionally, catalyzes the reversible transfer of the terminal phosphate group between ATP and AMP. Plays an important role in cellular energy homeostasis and in adenine nucleotide metabolism. The protein is Adenylate kinase of Campylobacter concisus (strain 13826).